Here is a 331-residue protein sequence, read N- to C-terminus: Taste receptor type 2 member 38 (331 aa).

Residues 1 to 17 (MLTLTPVLTVSYEAKIS) are Extracellular-facing. Residues 18–38 (FLFLSVVEFAVGIMANAFIVL) form a helical membrane-spanning segment. At 39–54 (VNFWDMVKKQPLNNCD) the chain is on the cytoplasmic side. A helical transmembrane segment spans residues 55–75 (IALLCLSITRLFLQGLLLLDA). The Extracellular portion of the chain corresponds to 76-94 (IQLACFQQMKDPLSHNYQA). The helical transmembrane segment at 95 to 115 (ILTLWMSANQVSLWLAACLSL) threads the bilayer. Residues 116–142 (LYCAKIVRFSHTFPLHLASWVSRRFLQ) are Cytoplasmic-facing. The helical transmembrane segment at 143-163 (MLLVALLFSGVCTALCLWDFF) threads the bilayer. The Extracellular segment spans residues 164–198 (SRSHTVVTSMLHMNNTEFNLQIEKLNFFYSFVFCN). N177 carries N-linked (GlcNAc...) asparagine glycosylation. The helical transmembrane segment at 199–219 (VGSVPPSLVFLISSGVLVISL) threads the bilayer. The Cytoplasmic segment spans residues 220–243 (GNHMRTMKSQTRGSRDPSLEAHVR). Residues 244–264 (AIIFLVSFLCFYVVSFCAALI) traverse the membrane as a helical segment. The Extracellular portion of the chain corresponds to 265-276 (SIPLLVLWHNKG). The chain crosses the membrane as a helical span at residues 277–297 (GVMVCIGMMAACPSGHAAILI). Residues 298–331 (SGNAKLKKVIVTILFWFQSRQKVRRVHKVLPRIL) are Cytoplasmic-facing.

The protein belongs to the G-protein coupled receptor T2R family. Expressed in tongue, stomach and duodenum.

It is found in the membrane. In terms of biological role, putative taste receptor which may play a role in the perception of bitterness. The sequence is that of Taste receptor type 2 member 38 (Tas2r38) from Rattus norvegicus (Rat).